The primary structure comprises 398 residues: Phosphoglycerate kinase (398 aa).

Substrate contacts are provided by residues 23 to 25 (DLN), Arg38, 61 to 64 (HFGR), Arg119, and Arg152. ATP is bound by residues Lys202, Glu324, and 354–357 (GGDT).

This sequence belongs to the phosphoglycerate kinase family. As to quaternary structure, monomer.

It localises to the cytoplasm. It catalyses the reaction (2R)-3-phosphoglycerate + ATP = (2R)-3-phospho-glyceroyl phosphate + ADP. The protein operates within carbohydrate degradation; glycolysis; pyruvate from D-glyceraldehyde 3-phosphate: step 2/5. In Bradyrhizobium diazoefficiens (strain JCM 10833 / BCRC 13528 / IAM 13628 / NBRC 14792 / USDA 110), this protein is Phosphoglycerate kinase.